We begin with the raw amino-acid sequence, 291 residues long: Porphobilinogen deaminase (291 aa).

Position 237 is an S-(dipyrrolylmethanemethyl)cysteine (C237).

Belongs to the HMBS family. As to quaternary structure, monomer. It depends on dipyrromethane as a cofactor.

It catalyses the reaction 4 porphobilinogen + H2O = hydroxymethylbilane + 4 NH4(+). Its pathway is porphyrin-containing compound metabolism; protoporphyrin-IX biosynthesis; coproporphyrinogen-III from 5-aminolevulinate: step 2/4. Its function is as follows. Tetrapolymerization of the monopyrrole PBG into the hydroxymethylbilane pre-uroporphyrinogen in several discrete steps. This is Porphobilinogen deaminase from Clostridium acetobutylicum (strain ATCC 824 / DSM 792 / JCM 1419 / IAM 19013 / LMG 5710 / NBRC 13948 / NRRL B-527 / VKM B-1787 / 2291 / W).